Here is a 138-residue protein sequence, read N- to C-terminus: Large ribosomal subunit protein uL16 (138 aa).

The segment covering 1–16 (MLIPRRVKHRKQHHPS) has biased composition (basic residues). Residues 1–25 (MLIPRRVKHRKQHHPSRSGAAKGGT) are disordered.

The protein belongs to the universal ribosomal protein uL16 family. In terms of assembly, part of the 50S ribosomal subunit.

Its function is as follows. Binds 23S rRNA and is also seen to make contacts with the A and possibly P site tRNAs. The protein is Large ribosomal subunit protein uL16 of Rhodococcus jostii (strain RHA1).